A 237-amino-acid chain; its full sequence is Demethylmenaquinone methyltransferase (237 aa).

S-adenosyl-L-methionine-binding positions include Thr58, Asp79, and 106–107; that span reads NA.

This sequence belongs to the class I-like SAM-binding methyltransferase superfamily. MenG/UbiE family.

The enzyme catalyses a 2-demethylmenaquinol + S-adenosyl-L-methionine = a menaquinol + S-adenosyl-L-homocysteine + H(+). The protein operates within quinol/quinone metabolism; menaquinone biosynthesis; menaquinol from 1,4-dihydroxy-2-naphthoate: step 2/2. Functionally, methyltransferase required for the conversion of demethylmenaquinol (DMKH2) to menaquinol (MKH2). The protein is Demethylmenaquinone methyltransferase of Listeria monocytogenes serotype 4a (strain HCC23).